The following is a 562-amino-acid chain: MATRARATILLLLAAVLFAAAAAASGEDRRRETSLRRCLQRCEQDRPPYERARCVQECKDQQQQQQERRREHGGHDDDRRDRDRRGEGSSEEEDEGRERGSRRRPYVFGRRSFRQVVRSDQGSVRLLPPFHQASSLLRGIKNYRVAVLEANPRSFVMPTHTDAHCICYVAQGEGVVAIIENGEKWSYAIRQGDVFVAPAGTINYLANTDGRRKLIVTKILHTISVPGQIQFFFAPGGRNPESFLSSFSKGVQRAAFKISEEKLEKLLGKQDKGVIIRASEEQVRELRRHASEGGHGPHWPLPPFGESSRGPFNILEQRPRFANRHGRLYEADARSFHDLAEHDIRVAVVNITAGSMNAPFYNTRSVKVAYVLDGEGEAEIVCPHLSRGGRGGESEERRRERGKGKWREEEEEEEEQQKGQEEEEEEQVGQGYETIRARLSRGTVFVVPSGHPIVVTSSRDSTLQIVCFDVHANNNERMYLAGMNSVLKKLDPQAKELAFAASAREVDELLNAQQESAFLAGPEKSGRRGEESEDEDRRRRRSHRGRGDEAVETLLRMAAAAV.

Positions 1–23 (MATRARATILLLLAAVLFAAAAA) are cleaved as a signal peptide. The span at 63-88 (QQQQERRREHGGHDDDRRDRDRRGEG) shows a compositional bias: basic and acidic residues. The disordered stretch occupies residues 63 to 103 (QQQQERRREHGGHDDDRRDRDRRGEGSSEEEDEGRERGSRR). Cupin type-1 domains follow at residues 106-264 (YVFG…EKLE) and 312-507 (FNIL…REVD). An N-linked (GlcNAc...) asparagine glycan is attached at Asn350. Disordered stretches follow at residues 383–430 (PHLS…QVGQ) and 516–550 (SAFL…GDEA). Positions 390 to 408 (RGGESEERRRERGKGKWRE) are enriched in basic and acidic residues. Over residues 409–427 (EEEEEEEQQKGQEEEEEEQ) the composition is skewed to acidic residues.

The protein belongs to the 7S seed storage protein family.

It localises to the secreted. Its function is as follows. Seed storage protein. The protein is 63 kDa globulin-like protein of Oryza sativa subsp. japonica (Rice).